The sequence spans 20 residues: Blooming-related protein 2 (20 aa).

Residues 1–20 are disordered; sequence VSAEYLERQGPKDDXDCFDD.

Possible 'checkpoint' protein for cell division in the blooming process. The sequence is that of Blooming-related protein 2 from Prorocentrum triestinum (Red tide alga).